Here is a 421-residue protein sequence, read N- to C-terminus: Proton extrusion protein PxcA (421 aa).

The disordered stretch occupies residues 124 to 153 (PTVHSSNPDDSQLMTSKNNSKPVPDPESDD). Polar residues predominate over residues 125–144 (TVHSSNPDDSQLMTSKNNSK). 4 helical membrane passes run 203 to 223 (FVLL…SFIV), 298 to 318 (AIKN…LLIS), 345 to 365 (IIIL…WEVI), and 381 to 401 (FIFL…KYWI).

It belongs to the CemA family.

The protein resides in the cell inner membrane. Required for H(+) efflux immediately after light irradiation to form a rapid H(+) concentration gradient across the thylakoid membranes. Together with PxcL, contributes to transient H(+) uptake following dark to light transition. This is Proton extrusion protein PxcA from Synechococcus sp. (strain ATCC 27144 / PCC 6301 / SAUG 1402/1) (Anacystis nidulans).